The primary structure comprises 245 residues: tRNA pseudouridine synthase A (245 aa).

Catalysis depends on Asp-52, which acts as the Nucleophile. Residue Tyr-111 participates in substrate binding.

Belongs to the tRNA pseudouridine synthase TruA family. As to quaternary structure, homodimer.

The catalysed reaction is uridine(38/39/40) in tRNA = pseudouridine(38/39/40) in tRNA. In terms of biological role, formation of pseudouridine at positions 38, 39 and 40 in the anticodon stem and loop of transfer RNAs. The chain is tRNA pseudouridine synthase A from Rhodopseudomonas palustris (strain BisB5).